Consider the following 253-residue polypeptide: MGQKTNPIGNRLGIIRGWDSNWYGGNDYGDKIAEDYKIRKYIHARLSKASVSKVIIERTLKLVTVTITTARPGIIIGKGGQEVDKLKEELKKVTDKEVQINIFEIKRPELDAFLVATSICRQIESRISYRRAIKMAIAASMRMNAEGIKVLISGRLNGAEMARSEGFKEGRVPLSTFRADIDYALAEAHTTYGRMGIKVWIMKGEVYGKRDLSPLAGMDKKQAGQGGGKGGDSPRGDRKPFNKGGKPDARKRK.

A KH type-2 domain is found at 38–106 (IRKYIHARLS…EVQINIFEIK (69 aa)). The interval 216–253 (AGMDKKQAGQGGGKGGDSPRGDRKPFNKGGKPDARKRK) is disordered. A compositionally biased stretch (basic and acidic residues) spans 232-253 (DSPRGDRKPFNKGGKPDARKRK).

Belongs to the universal ribosomal protein uS3 family. As to quaternary structure, part of the 30S ribosomal subunit. Forms a tight complex with proteins S10 and S14.

Its function is as follows. Binds the lower part of the 30S subunit head. Binds mRNA in the 70S ribosome, positioning it for translation. The sequence is that of Small ribosomal subunit protein uS3 from Flavobacterium psychrophilum (strain ATCC 49511 / DSM 21280 / CIP 103535 / JIP02/86).